Consider the following 94-residue polypeptide: Small ribosomal subunit protein uS19m (94 aa).

The protein belongs to the universal ribosomal protein uS19 family.

It is found in the mitochondrion. This Petunia hybrida (Petunia) protein is Small ribosomal subunit protein uS19m (RPS19).